The primary structure comprises 85 residues: Omega-conotoxin-like Am6.5 (85 aa).

An N-terminal signal peptide occupies residues 1–19 (MCILIVAVLFLTAWTFVMA). The propeptide occupies 20–53 (DDPRDEPDTVVRGGKLFSRARDEMNPAASKLNER). 3 cysteine pairs are disulfide-bonded: Cys-55–Cys-73, Cys-62–Cys-77, and Cys-72–Cys-81. Residue Gln-84 is modified to Glutamine amide.

It belongs to the conotoxin O1 family. Post-translationally, is not hydroxylated. As to expression, expressed by the venom duct.

It localises to the secreted. Omega-conotoxins act at presynaptic membranes, they bind and block voltage-gated calcium channels (Cav). In Conus amadis (Amadis cone), this protein is Omega-conotoxin-like Am6.5.